A 427-amino-acid polypeptide reads, in one-letter code: 3-phosphoshikimate 1-carboxyvinyltransferase (427 aa).

3-phosphoshikimate is bound by residues Lys22, Ser23, and Arg27. Lys22 serves as a coordination point for phosphoenolpyruvate. Phosphoenolpyruvate-binding residues include Gly96 and Arg124. Residues Ser169, Ser170, Gln171, Ser197, Asp313, Asn336, and Lys340 each contribute to the 3-phosphoshikimate site. Gln171 contributes to the phosphoenolpyruvate binding site. Asp313 acts as the Proton acceptor in catalysis. Residues Arg344, Arg386, and Lys411 each coordinate phosphoenolpyruvate.

Belongs to the EPSP synthase family. In terms of assembly, monomer.

It localises to the cytoplasm. The enzyme catalyses 3-phosphoshikimate + phosphoenolpyruvate = 5-O-(1-carboxyvinyl)-3-phosphoshikimate + phosphate. The protein operates within metabolic intermediate biosynthesis; chorismate biosynthesis; chorismate from D-erythrose 4-phosphate and phosphoenolpyruvate: step 6/7. Catalyzes the transfer of the enolpyruvyl moiety of phosphoenolpyruvate (PEP) to the 5-hydroxyl of shikimate-3-phosphate (S3P) to produce enolpyruvyl shikimate-3-phosphate and inorganic phosphate. The chain is 3-phosphoshikimate 1-carboxyvinyltransferase from Salmonella typhi.